Reading from the N-terminus, the 1111-residue chain is MNSPNESDGMPGREPSLEILPRTPLHSIPVAVEVKPVLPGAMPSSMGGGGGGSPSPVELRGALAGPMDPALREQQLQQELLVLKQQQQLQKQLLFAEFQKQHDHLTRQHEVQLQKHLKQQQEMLAAKRQQELEQQRQREQQRQEELEKQRLEQQLLILRNKEKSKESAIASTEVKLRLQEFLLSKSKEPTPGSLNHSLPQHPKCWGAHHASLDQSSPPQSGPPGTPPSYKLPLLGPYDSRDDFPLRKTASEPNLKVRSRLKQKVAERRSSPLLRRKDGTVISTFKKRAVEITGTGPGVSSVCNSAPGSGPSSPNSSHSAIAENGFTGSVPNIPTEMLPQHRALPLDSSPNQFSLYTSPSLPNISLGLQATVTVTNSHLTASPKLSTQQEAERQALQSLRQGGTLTGKFMSTSSIPGCLLGVTLEGDTSPHGHASLLQHVLLLEQARQQSTLIAVPLHGQSPLVTGERVATSMRTVGKLPRHRPLSRTQSSPLPQSPQALQQLVMQQQHQQFLEKQKQQQMQLGKILTKTGELPRQPTTHPEETEEELTEQQEALLGEGALTMPREGSTESESTQEDLEEEEDEEEEDEDCIQVKDEEGESGPDEGPDLEESSAGYKKLFTDAQQLQPLQVYQAPLSLATVPHQALGRTQSSPAAPGSMKSPPDQPTKHLFTTGVVYDTFMLKHQCMCGNTHVHPEHAGRIQSIWSRLQETGLLSKCERIRGRKATLDEIQTVHSEYHTLLYGTSPLNRQKLDSKKLLGPISQKMYAMLPCGGIGVDSDTVWNEMHSSSAVRMAVGCLVELAFKVAAGELKNGFAIIRPPGHHAEESTAMGFCFFNSVAITAKLLQQKLNVGKVLIVDWDIHHGNGTQQAFYDDPSVLYISLHRYDNGNFFPGSGAPEEVGGGPGMGYNVNVAWTGGVDPPIGDVEYLTAFRTVVMPIAHEFSPDVVLVSAGFDAVEGHLSPLGGYSVTARCFGHLTRQLMTLAGGRVVLALEGGHDLTAICDASEACVSALLSVELQPLDEAVLQQKPSINAVATLEKVIEIQSKHWSCVQRFATGLGCSLQEAQAGETEEAETVSAMALLSVGAEQAQAVATQEHSPRPAEEPMEQEPTL.

Lysine 35 is covalently cross-linked (Glycyl lysine isopeptide (Lys-Gly) (interchain with G-Cter in SUMO2)). Disordered regions lie at residues 40–63, 107–136, and 187–272; these read GAMPSSMGGGGGGSPSPVELRGAL, RQHEVQLQKHLKQQQEMLAAKRQQELEQQR, and KEPT…SSPL. A compositionally biased stretch (basic and acidic residues) spans 238-249; it reads DSRDDFPLRKTA. Position 250 is a phosphoserine; by AMPK, CaMK1, SIK1 and PKD/PRKD1 (serine 250). The segment covering 263–272 has biased composition (basic and acidic residues); it reads KVAERRSSPL. At threonine 283 the chain carries Phosphothreonine; by PKC. The tract at residues 474 to 495 is disordered; sequence TVGKLPRHRPLSRTQSSPLPQS. Residues 485–495 are compositionally biased toward low complexity; sequence SRTQSSPLPQS. Serine 489 is subject to Phosphoserine; by AMPK, CaMK1, SIK1 and PKD/PRKD1. An N6-acetyllysine modification is found at lysine 524. Disordered regions lie at residues 527–611 and 645–666; these read TKTG…LEES and LGRTQSSPAAPGSMKSPPDQPT. The segment covering 572–610 has biased composition (acidic residues); sequence STQEDLEEEEDEEEEDEDCIQVKDEEGESGPDEGPDLEE. Serine 600 and serine 650 each carry phosphoserine. Residues 671 to 1017 form a histone deacetylase region; the sequence is TTGVVYDTFM…VSALLSVELQ (347 aa). Zn(2+)-binding residues include cysteine 685, cysteine 687, histidine 693, and cysteine 770. Residue histidine 822 is part of the active site. The Nuclear export signal motif lies at 1070–1109; that stretch reads EEAETVSAMALLSVGAEQAQAVATQEHSPRPAEEPMEQEP. The disordered stretch occupies residues 1086-1111; the sequence is EQAQAVATQEHSPRPAEEPMEQEPTL. A Phosphoserine modification is found at serine 1097.

This sequence belongs to the histone deacetylase family. HD type 2 subfamily. As to quaternary structure, interacts with AHRR, BAHD1, BCOR, HDAC7, HDAC9, CTBP1, MEF2C, NCOR2, NRIP1, PHB2 and a 14-3-3 chaperone protein. Interacts with BCL6, DDIT3/CHOP, GRK5, KDM5B and MYOCD. Interacts with EP300 in the presence of TFAP2C. Interacts with ANKRA2. Interacts with CUL7 (as part of the 3M complex); negatively regulated by ANKRA2. Interacts with ZBTB7B; the interaction allows the recruitment of HDAC4 on CD8 loci for deacetylation and possible inhibition of CD8 genes expression. Interacts with RARA. In terms of processing, phosphorylated by AMPK, CaMK1, SIK1 and PRKD1 at Ser-250 and Ser-489. The phosphorylation is required for the export to the cytoplasm and inhibition. Phosphorylated by the PKC kinases PKN1 and PKN2, impairing nuclear import. Phosphorylated by GRK5, leading to nuclear export of HDAC5 and allowing MEF2-mediated transcription. Ubiquitinated. Polyubiquitination however does not lead to its degradation.

The protein localises to the nucleus. It localises to the cytoplasm. It catalyses the reaction N(6)-acetyl-L-lysyl-[histone] + H2O = L-lysyl-[histone] + acetate. Responsible for the deacetylation of lysine residues on the N-terminal part of the core histones (H2A, H2B, H3 and H4). Histone deacetylation gives a tag for epigenetic repression and plays an important role in transcriptional regulation, cell cycle progression and developmental events. Histone deacetylases act via the formation of large multiprotein complexes. Involved in muscle maturation by repressing transcription of myocyte enhancer MEF2C. During muscle differentiation, it shuttles into the cytoplasm, allowing the expression of myocyte enhancer factors. Serves as a corepressor of RARA and causes its deacetylation. In association with RARA, plays a role in the repression of microRNA-10a and thereby in the inflammatory response. The polypeptide is Histone deacetylase 5 (HDAC5) (Cricetulus griseus (Chinese hamster)).